Reading from the N-terminus, the 225-residue chain is PKHD-type hydroxylase YbiX (225 aa).

Residues 78–177 (TLSTPLFNRY…RVASFMWIQS (100 aa)) enclose the Fe2OG dioxygenase domain. 3 residues coordinate Fe cation: His96, Asp98, and His158. Arg168 contacts 2-oxoglutarate.

It depends on Fe(2+) as a cofactor. Requires L-ascorbate as cofactor.

This Shigella dysenteriae serotype 1 (strain Sd197) protein is PKHD-type hydroxylase YbiX.